The sequence spans 31 residues: Cytochrome b6-f complex subunit 6 (31 aa).

Residues 4–24 form a helical membrane-spanning segment; the sequence is ITSYFGFLLAALTITSALFIG.

Belongs to the PetL family. As to quaternary structure, the 4 large subunits of the cytochrome b6-f complex are cytochrome b6, subunit IV (17 kDa polypeptide, PetD), cytochrome f and the Rieske protein, while the 4 small subunits are PetG, PetL, PetM and PetN. The complex functions as a dimer.

The protein localises to the plastid. The protein resides in the chloroplast thylakoid membrane. Functionally, component of the cytochrome b6-f complex, which mediates electron transfer between photosystem II (PSII) and photosystem I (PSI), cyclic electron flow around PSI, and state transitions. PetL is important for photoautotrophic growth as well as for electron transfer efficiency and stability of the cytochrome b6-f complex. This chain is Cytochrome b6-f complex subunit 6, found in Coffea arabica (Arabian coffee).